The following is a 137-amino-acid chain: Phospholipase A2 homolog PLA2-03 (137 aa).

A signal peptide spans 1–16; the sequence is MRTLWIVAVLLVGVEG. Intrachain disulfides connect Cys-42/Cys-131, Cys-44/Cys-60, Cys-59/Cys-111, Cys-65/Cys-137, Cys-66/Cys-104, Cys-73/Cys-97, and Cys-91/Cys-102. Residues 121 to 133 are important for membrane-damaging activities in eukaryotes and bacteria; heparin-binding; it reads KKYKIFPKFLCKK.

It belongs to the phospholipase A2 family. Group II subfamily. K49 sub-subfamily. As to expression, expressed by the venom gland.

The protein localises to the secreted. Functionally, snake venom phospholipase A2 homolog that lacks enzymatic activity. Is myotoxic and displays edema-inducing activities in mouse paw. A model of myotoxic mechanism has been proposed: an apo Lys49-PLA2 is activated by the entrance of a hydrophobic molecule (e.g. fatty acid) at the hydrophobic channel of the protein leading to a reorientation of a monomer. This reorientation causes a transition between 'inactive' to 'active' states, causing alignment of C-terminal and membrane-docking sites (MDoS) side-by-side and putting the membrane-disruption sites (MDiS) in the same plane, exposed to solvent and in a symmetric position for both monomers. The MDoS region stabilizes the toxin on membrane by the interaction of charged residues with phospholipid head groups. Subsequently, the MDiS region destabilizes the membrane with penetration of hydrophobic residues. This insertion causes a disorganization of the membrane, allowing an uncontrolled influx of ions (i.e. calcium and sodium), and eventually triggering irreversible intracellular alterations and cell death. This chain is Phospholipase A2 homolog PLA2-03, found in Ovophis okinavensis (Ryukyu Island pit viper).